A 190-amino-acid polypeptide reads, in one-letter code: Small ribosomal subunit protein eS7 (190 aa).

This sequence belongs to the eukaryotic ribosomal protein eS7 family.

This chain is Small ribosomal subunit protein eS7 (RpS7), found in Manduca sexta (Tobacco hawkmoth).